The primary structure comprises 221 residues: PKHD-type hydroxylase PMT_0286 (221 aa).

The region spanning 80 to 174 is the Fe2OG dioxygenase domain; it reads HIHGVMFSRS…RLVCVGWIQS (95 aa). Residues His-98, Asp-100, and His-155 each contribute to the Fe cation site. A 2-oxoglutarate-binding site is contributed by Arg-165.

The cofactor is Fe(2+). It depends on L-ascorbate as a cofactor.

In Prochlorococcus marinus (strain MIT 9313), this protein is PKHD-type hydroxylase PMT_0286.